A 104-amino-acid polypeptide reads, in one-letter code: Large ribosomal subunit protein uL24 (104 aa).

It belongs to the universal ribosomal protein uL24 family. In terms of assembly, part of the 50S ribosomal subunit.

One of two assembly initiator proteins, it binds directly to the 5'-end of the 23S rRNA, where it nucleates assembly of the 50S subunit. Its function is as follows. One of the proteins that surrounds the polypeptide exit tunnel on the outside of the subunit. The polypeptide is Large ribosomal subunit protein uL24 (Bradyrhizobium sp. (strain ORS 278)).